Consider the following 194-residue polypeptide: HTH-type nicotine-responsive transcriptional repressor HdnoR (194 aa).

Residues 6 to 66 (VDRRQQLIDA…AAAAELLQQL (61 aa)) form the HTH tetR-type domain. The H-T-H motif DNA-binding region spans 29–48 (SLRTIASEAKASLAAVHVCF).

Homodimer.

With respect to regulation, 6-hydroxy-D-nicotine and 6-hydroxy-L-nicotine prevent HdnoR from binding to the IR1 DNA. Both 6-hydroxy-nicotine enantiomers prevent DNA-protein complex formation at micromolar concentrations, with the D-enantiomer being twice as potent as the L-enantiomer. A thousand-fold higher L-nicotine concentration is required to elicit a similar effect. Its function is as follows. Represses expression of the 6-hydroxy-D-nicotine oxidase (6-hdno). Acts by binding to a gene operator site consisting of two inverted repeats, IR1 (covering the 6-hdno promoter region) and IR2 (situated upstream from the 6-hdno promoter). Binding to one site may stimulate binding of the protein to the second site. In Paenarthrobacter nicotinovorans (Arthrobacter nicotinovorans), this protein is HTH-type nicotine-responsive transcriptional repressor HdnoR.